Consider the following 446-residue polypeptide: Minor teichoic acid biosynthesis protein GgaA (446 aa).

Belongs to the glycosyltransferase 2 family.

The protein operates within cell wall biogenesis; poly(glucopyranosyl N-acetylgalactosamine 1-phosphate) teichoic acid biosynthesis. Functionally, involved in the biosynthesis of galactosamine-containing minor teichoic acid, a non-essential cell wall polymer in B.subtilis 168. This Bacillus subtilis (strain 168) protein is Minor teichoic acid biosynthesis protein GgaA (ggaA).